Reading from the N-terminus, the 446-residue chain is DNA repair protein RadA (446 aa).

Residues 10–27 (CQACGNQQSKWLGKCPDC) form a C4-type zinc finger. 96–103 (GSPGVGKS) contacts ATP. A RadA KNRFG motif motif is present at residues 253–257 (KNRFG). The segment at 349-446 (DVFVNISGGV…KELSQVLEWM (98 aa)) is lon-protease-like.

The protein belongs to the RecA family. RadA subfamily.

In terms of biological role, DNA-dependent ATPase involved in processing of recombination intermediates, plays a role in repairing DNA breaks. Stimulates the branch migration of RecA-mediated strand transfer reactions, allowing the 3' invading strand to extend heteroduplex DNA faster. Binds ssDNA in the presence of ADP but not other nucleotides, has ATPase activity that is stimulated by ssDNA and various branched DNA structures, but inhibited by SSB. Does not have RecA's homology-searching function. This chain is DNA repair protein RadA, found in Campylobacter jejuni subsp. jejuni serotype O:2 (strain ATCC 700819 / NCTC 11168).